Here is an 870-residue protein sequence, read N- to C-terminus: Elastin (870 aa).

Residues 1–27 (MAGLTAAVPQPGVLLILLLNLLHPAQP) form the signal peptide. 4-hydroxyproline occurs at positions 39 and 75. Hydroxyproline is present on Pro-87. A 4-hydroxyproline modification is found at Pro-105. 2 positions are modified to allysine: Lys-122 and Lys-126. 4 positions are modified to 4-hydroxyproline: Pro-207, Pro-220, Pro-223, and Pro-244. Allysine is present on residues Lys-290 and Lys-309. Pro-338 is modified (4-hydroxyproline). Allysine is present on residues Lys-360 and Lys-363. Pro-375 is modified (hydroxyproline). 4-hydroxyproline occurs at positions 402 and 408. Hydroxyproline is present on residues Pro-413 and Pro-418. Allysine occurs at positions 434, 438, 441, 485, and 488. 4-hydroxyproline occurs at positions 518 and 539. Allysine occurs at positions 554, 558, 615, 619, and 623. A 4-hydroxyproline mark is found at Pro-637, Pro-646, Pro-662, and Pro-670. 2 positions are modified to allysine: Lys-677 and Lys-680. Pro-715 is modified (4-hydroxyproline). Lys-730, Lys-734, Lys-793, and Lys-796 each carry allysine. Pro-842 is subject to 4-hydroxyproline. A disulfide bridge links Cys-860 with Cys-865.

It belongs to the elastin family. In terms of assembly, the polymeric elastin chains are cross-linked together into an extensible 3D network. Forms a ternary complex with BGN and MFAP2. Interacts with MFAP2 via divalent cations (calcium &gt; magnesium &gt; manganese) in a dose-dependent and saturating manner. Interacts with FBLN5 and FBN1. Forms a ternary complex with FBN1 and FBLN2 or FBLN5. Interacts with MFAP4 in a Ca (2+)-dependent manner; this interaction promotes ELN self-assembly. Interacts with EFEMP2 with moderate affinity. In terms of processing, elastin is formed through the cross-linking of its soluble precursor tropoelastin. Cross-linking is initiated through the action of lysyl oxidase on exposed lysines to form allysine. Subsequent spontaneous condensation reactions with other allysine or unmodified lysine residues result in various bi-, tri-, and tetrafunctional cross-links. The most abundant cross-links in mature elastin fibers are lysinonorleucine, allysine aldol, desmosine, and isodesmosine. Hydroxylation on proline residues within the sequence motif, GXPG, is most likely to be 4-hydroxy as this fits the requirement for 4-hydroxylation in vertebrates.

The protein localises to the secreted. It is found in the extracellular space. It localises to the extracellular matrix. Its function is as follows. Major structural protein of tissues such as aorta and nuchal ligament, which must expand rapidly and recover completely. Molecular determinant of the late arterial morphogenesis, stabilizing arterial structure by regulating proliferation and organization of vascular smooth muscle. This chain is Elastin (Eln), found in Rattus norvegicus (Rat).